We begin with the raw amino-acid sequence, 218 residues long: Nonsense-mediated decay protein 4 (218 aa).

It is found in the cytoplasm. In terms of biological role, involved in nonsense-mediated decay of mRNAs containing premature stop codons. This Saccharomyces cerevisiae (strain ATCC 204508 / S288c) (Baker's yeast) protein is Nonsense-mediated decay protein 4 (NMD4).